The primary structure comprises 154 residues: Endoribonuclease YbeY (154 aa).

Zn(2+) contacts are provided by H114, H118, and H124.

The protein belongs to the endoribonuclease YbeY family. Zn(2+) serves as cofactor.

The protein localises to the cytoplasm. Functionally, single strand-specific metallo-endoribonuclease involved in late-stage 70S ribosome quality control and in maturation of the 3' terminus of the 16S rRNA. The polypeptide is Endoribonuclease YbeY (Haemophilus influenzae (strain ATCC 51907 / DSM 11121 / KW20 / Rd)).